A 52-amino-acid polypeptide reads, in one-letter code: Large ribosomal subunit protein eL39 (52 aa).

It belongs to the eukaryotic ribosomal protein eL39 family. Interacts with YIH1.

The polypeptide is Large ribosomal subunit protein eL39 (RPL39) (Encephalitozoon cuniculi (strain GB-M1) (Microsporidian parasite)).